A 259-amino-acid chain; its full sequence is Thiazole synthase (259 aa).

Residue Lys-95 is the Schiff-base intermediate with DXP of the active site. 1-deoxy-D-xylulose 5-phosphate contacts are provided by residues Gly-156, 183–184 (AG), and 205–206 (NS).

The protein belongs to the ThiG family. Homotetramer. Forms heterodimers with either ThiH or ThiS.

It is found in the cytoplasm. It catalyses the reaction [ThiS sulfur-carrier protein]-C-terminal-Gly-aminoethanethioate + 2-iminoacetate + 1-deoxy-D-xylulose 5-phosphate = [ThiS sulfur-carrier protein]-C-terminal Gly-Gly + 2-[(2R,5Z)-2-carboxy-4-methylthiazol-5(2H)-ylidene]ethyl phosphate + 2 H2O + H(+). The protein operates within cofactor biosynthesis; thiamine diphosphate biosynthesis. Functionally, catalyzes the rearrangement of 1-deoxy-D-xylulose 5-phosphate (DXP) to produce the thiazole phosphate moiety of thiamine. Sulfur is provided by the thiocarboxylate moiety of the carrier protein ThiS. In vitro, sulfur can be provided by H(2)S. The sequence is that of Thiazole synthase from Coxiella burnetii (strain CbuK_Q154) (Coxiella burnetii (strain Q154)).